Reading from the N-terminus, the 231-residue chain is ADP-ribosylation factor-like protein 6-interacting protein 4 (231 aa).

Positions 1–19 are enriched in basic residues; it reads MAHVSSRKRSRSRSRSRGR. Residues 1–154 form a disordered region; that stretch reads MAHVSSRKRS…EDNDGPVLTD (154 aa). Positions 20–34 are enriched in basic and acidic residues; the sequence is RGSEKRSKRSSKDSS. Residues 64–89 are compositionally biased toward low complexity; the sequence is TSRSSSSSSSSSSSSSSSSTSSSSSS. The span at 92–119 shows a compositional bias: basic residues; sequence RKKRGKHKDKKKRKKKKKRKKKMKRKGK. A phosphoserine mark is found at Ser142 and Ser176. A Glycyl lysine isopeptide (Lys-Gly) (interchain with G-Cter in SUMO2) cross-link involves residue Lys193.

The protein belongs to the ARL6IP4 family. As to quaternary structure, interacts with ARL6. Interacts with ZCCHC17. Interacts with SRSF2.

It localises to the nucleus. The protein resides in the nucleolus. The protein localises to the nucleus speckle. Involved in modulating alternative pre-mRNA splicing with either 5' distal site activation or preferential use of 3' proximal site. The polypeptide is ADP-ribosylation factor-like protein 6-interacting protein 4 (Arl6ip4) (Rattus norvegicus (Rat)).